The following is a 230-amino-acid chain: 3-beta-hydroxysteroid-Delta(8),Delta(7)-isomerase (230 aa).

An N-acetylthreonine modification is found at Thr-2. 4 consecutive transmembrane segments (helical) span residues 29 to 49 (WHIL…TWLL), 66 to 86 (LCWF…FSFY), 121 to 141 (MESV…IAFL), and 185 to 205 (FWFY…ILVF). The region spanning 61 to 204 (GRRLALCWFA…IWLVIPGILV (144 aa)) is the EXPERA domain.

This sequence belongs to the EBP family. Expressed in liver.

The protein localises to the endoplasmic reticulum membrane. The protein resides in the nucleus envelope. It localises to the cytoplasmic vesicle. It catalyses the reaction lathosterol = 5alpha-cholest-8-en-3beta-ol. The catalysed reaction is zymosterol = 5alpha-cholesta-7,24-dien-3beta-ol. It carries out the reaction 5,6alpha-epoxy-5alpha-cholestan-3beta-ol + H2O = 5alpha-cholestane-3beta,5,6beta-triol. The enzyme catalyses 5,6beta-epoxy-5beta-cholestan-3beta-ol + H2O = 5alpha-cholestane-3beta,5,6beta-triol. It functions in the pathway steroid biosynthesis; cholesterol biosynthesis. With respect to regulation, enzymatic activity is induced by 25-hydroxycholesterol, cholestyramine and lovastatin. Functionally, isomerase that catalyzes the conversion of Delta(8)-sterols to their corresponding Delta(7)-isomers. Component of the microsomal antiestrogen binding site (AEBS), a multiproteic complex at the ER membrane that consists of an association between EBP and 7-dehydrocholesterol reductase/DHCR7. This complex is responsible for cholesterol-5,6-epoxide hydrolase (ChEH) activity, which consists in the hydration of cholesterol-5,6-epoxides (5,6-EC) into cholestane-3beta,5alpha,6beta-triol (CT). The precise role of each component of this complex has not been described yet. The chain is 3-beta-hydroxysteroid-Delta(8),Delta(7)-isomerase from Rattus norvegicus (Rat).